Here is a 466-residue protein sequence, read N- to C-terminus: Cysteine--tRNA ligase (466 aa).

Cys-28 contacts Zn(2+). Residues 30–40 (PTVYNYIHIGN) carry the 'HIGH' region motif. Zn(2+)-binding residues include Cys-208, His-233, and Glu-237. Residues 265–269 (KMSKS) carry the 'KMSKS' region motif. Lys-268 lines the ATP pocket.

The protein belongs to the class-I aminoacyl-tRNA synthetase family. In terms of assembly, monomer. Zn(2+) serves as cofactor.

The protein resides in the cytoplasm. The enzyme catalyses tRNA(Cys) + L-cysteine + ATP = L-cysteinyl-tRNA(Cys) + AMP + diphosphate. This Staphylococcus aureus (strain MRSA252) protein is Cysteine--tRNA ligase.